The following is a 136-amino-acid chain: Large ribosomal subunit protein uL16c (136 aa).

Positions methionine 1–lysine 20 are disordered.

This sequence belongs to the universal ribosomal protein uL16 family. As to quaternary structure, part of the 50S ribosomal subunit.

Its subcellular location is the plastid. The protein localises to the chloroplast. The protein is Large ribosomal subunit protein uL16c of Triticum aestivum (Wheat).